The chain runs to 544 residues: MSKEIKFGNDSRSKMLNGVNILADAVKITLGPKGRNVVIDKSYGAPQITKDGVTVAKEIELEDKFENMGAQMVKDVASQTNDAAGDGTTTATVLAQAIIADGLKAVAAGMNPMDLKRGIDQTVKAAVAELKKLSTPCSDSKAITQVGTISANSDHEIGEIIAQAMQKVGNQGVITVEEGQGLETELDVVEGMQFDRGYLSPYFMTNHESGTVELENPYILLVDKKIGNIRELLPTLEAVAKASKPLLIIAEDVEGEALATLVVNNMRGIVKVCAVKAPGFGDRRKAMLQDIATLTGGTVISEEIGLDMEKVQLEDLGQAKRVVINKDETTIIDGIGDESVINARVSQIKQQIEASTSDYDKEKLQERSAKLAGGVAVIKVGASTEVEMKEKKDRVDDALHATRAAVEEGVVAGGGVALVRVAAILKGLTGENEDQNVGIRVALRAMEAPLRQIVENCGEEASVVANNVRQGEGNYGYNATTGEYGDMLEMGIIDPTKVARSALQFAASVAALMITTECMITDRPVAASAAAPDMGGMGGMGGMM.

ATP contacts are provided by residues 29-32 (TLGP), lysine 50, 86-90 (DGTTT), glycine 414, and aspartate 494.

Belongs to the chaperonin (HSP60) family. In terms of assembly, forms a cylinder of 14 subunits composed of two heptameric rings stacked back-to-back. Interacts with the co-chaperonin GroES.

It is found in the cytoplasm. It carries out the reaction ATP + H2O + a folded polypeptide = ADP + phosphate + an unfolded polypeptide.. Its function is as follows. Together with its co-chaperonin GroES, plays an essential role in assisting protein folding. The GroEL-GroES system forms a nano-cage that allows encapsulation of the non-native substrate proteins and provides a physical environment optimized to promote and accelerate protein folding. This chain is Chaperonin GroEL 1, found in Psychromonas ingrahamii (strain DSM 17664 / CCUG 51855 / 37).